The sequence spans 689 residues: Protein CFAP20DC (689 aa).

Disordered stretches follow at residues 241-263 (LKST…NRIE), 333-423 (SKES…GPSE), and 584-659 (ISTS…DLSV). Composition is skewed to polar residues over residues 251–260 (TPSGSSSGNN) and 343–359 (EESQ…SSRP). The span at 394–405 (SEDDFYGGDSSE) shows a compositional bias: acidic residues. Polar residues predominate over residues 409–421 (HSIQGSRGPTTGP). Low complexity predominate over residues 584-593 (ISTSSDDTTT).

The protein is Protein CFAP20DC of Homo sapiens (Human).